Reading from the N-terminus, the 177-residue chain is ATP synthase subunit delta (177 aa).

This sequence belongs to the ATPase delta chain family. As to quaternary structure, F-type ATPases have 2 components, F(1) - the catalytic core - and F(0) - the membrane proton channel. F(1) has five subunits: alpha(3), beta(3), gamma(1), delta(1), epsilon(1). F(0) has three main subunits: a(1), b(2) and c(10-14). The alpha and beta chains form an alternating ring which encloses part of the gamma chain. F(1) is attached to F(0) by a central stalk formed by the gamma and epsilon chains, while a peripheral stalk is formed by the delta and b chains.

It localises to the cell inner membrane. Functionally, f(1)F(0) ATP synthase produces ATP from ADP in the presence of a proton or sodium gradient. F-type ATPases consist of two structural domains, F(1) containing the extramembraneous catalytic core and F(0) containing the membrane proton channel, linked together by a central stalk and a peripheral stalk. During catalysis, ATP synthesis in the catalytic domain of F(1) is coupled via a rotary mechanism of the central stalk subunits to proton translocation. In terms of biological role, this protein is part of the stalk that links CF(0) to CF(1). It either transmits conformational changes from CF(0) to CF(1) or is implicated in proton conduction. This is ATP synthase subunit delta from Shewanella denitrificans (strain OS217 / ATCC BAA-1090 / DSM 15013).